Here is a 181-residue protein sequence, read N- to C-terminus: Ribulose bisphosphate carboxylase small subunit, chloroplastic 6 (181 aa).

A chloroplast-targeting transit peptide spans 1-57; sequence MASSIVSSAAVATRSNVAQASMVAPFTGLKSAASFPVTKKNNNVDITSLASNGGRVR.

The protein belongs to the RuBisCO small chain family. Heterohexadecamer of 8 large and 8 small subunits.

The protein localises to the plastid. The protein resides in the chloroplast. RuBisCO catalyzes two reactions: the carboxylation of D-ribulose 1,5-bisphosphate, the primary event in carbon dioxide fixation, as well as the oxidative fragmentation of the pentose substrate. Both reactions occur simultaneously and in competition at the same active site. Although the small subunit is not catalytic it is essential for maximal activity. This is Ribulose bisphosphate carboxylase small subunit, chloroplastic 6 from Solanum tuberosum (Potato).